The chain runs to 134 residues: ATP synthase epsilon chain (134 aa).

The protein belongs to the ATPase epsilon chain family. F-type ATPases have 2 components, CF(1) - the catalytic core - and CF(0) - the membrane proton channel. CF(1) has five subunits: alpha(3), beta(3), gamma(1), delta(1), epsilon(1). CF(0) has three main subunits: a, b and c.

Its subcellular location is the cell membrane. Functionally, produces ATP from ADP in the presence of a proton gradient across the membrane. This is ATP synthase epsilon chain from Ruminiclostridium cellulolyticum (strain ATCC 35319 / DSM 5812 / JCM 6584 / H10) (Clostridium cellulolyticum).